Consider the following 353-residue polypeptide: MIETDAVVIGAGPVGLFQAFQLGLQGIGAHLIDALPQAGGQCVTLYGDKPIYDIAGIPVCTGRELIDRLLAQLAPFKPHWHLNTLVAALAPQPDARLLLETDTGARLLARSVFIAAGVGAFVPRTLKMAGMERFVGTQLFYQVLPAGMDVTGRQVIVHGGDEGAVACAVELAEQGRAARVSLLYRRDLFQAPEALLQRLQRLRAAGRIAVEVGQITGIASSGMPQCSTLRALQVVDAQGASHALPVDVLVAVLGISPRLGPLTDWGMAMARKQLQVDTEAFRTSVPGIYAVGDINTYPGKRRLILCGFHEATLAAFAAAEALKGDKVALQYTTTSAHLHRLLGVAPASGATGP.

FAD-binding residues include D33, Q41, Y46, V86, F121, D293, and T333.

Belongs to the ferredoxin--NADP reductase type 2 family. Homodimer. The cofactor is FAD.

The enzyme catalyses 2 reduced [2Fe-2S]-[ferredoxin] + NADP(+) + H(+) = 2 oxidized [2Fe-2S]-[ferredoxin] + NADPH. The polypeptide is Ferredoxin--NADP reductase (Verminephrobacter eiseniae (strain EF01-2)).